The chain runs to 427 residues: Inward rectifier potassium channel 2 (427 aa).

Residues 1–81 (MGSVRTNRYS…IFTTCVDIRW (81 aa)) are Cytoplasmic-facing. C76 is subject to S-nitrosocysteine. Residues 82-106 (RWMLVIFCLAFVLSWLFFGCVFWLI) form a helical membrane-spanning segment. Residues 107 to 128 (ALLHGDLDASRESKACVSEVNS) lie on the Extracellular side of the membrane. The segment at residues 129–140 (FTAAFLFSIETQ) is an intramembrane region (helical; Pore-forming). The pore-forming intramembrane region spans 141-147 (TTIGYGF). The Selectivity filter signature appears at 142-147 (TIGYGF). Topologically, residues 148–156 (RCVTDECPV) are extracellular. Residues 157 to 178 (AVFMVVFQSIVGCIIDAFIIGA) form a helical membrane-spanning segment. Residues 179-427 (VMAKMAKPKK…PRPLRRESEI (249 aa)) are Cytoplasmic-facing. The tract at residues 181-208 (AKMAKPKKRNETLVFSHNAVIAMRDGKL) is polyphosphoinositide (PIP2)-binding. The tract at residues 384–427 (SKEEDDSENGVPESTSTDTPPDIDLHNQASVPLEPRPLRRESEI) is disordered. Positions 425–427 (SEI) match the PDZ-binding motif.

The protein belongs to the inward rectifier-type potassium channel (TC 1.A.2.1) family. KCNJ2 subfamily. In terms of assembly, homotetramer. Homomultimeric and heteromultimeric association with KCNJ4/Kir2.3. Can form heteromeric channels with Kir2.6/KCNJ18. Associates, via its PDZ-recognition domain, with a complex containing LIN7A, LIN7B, LIN7C, DLG1, CASK and APBA1. S-nitrosylation increases the open probability and inward rectifying currents. In terms of tissue distribution, highly expressed in the ventricle and skeletal muscle, moderately in cerebrum and cerebellum. Only low levels are detected in kidney or lung.

The protein localises to the cell membrane. It is found in the sarcolemma. It localises to the T-tubule. The enzyme catalyses K(+)(in) = K(+)(out). With respect to regulation, activated by phosphatidylinositol 4,5 biphosphate (PtdIns(4,5)P2). Functionally, inward rectifier potassium channels are characterized by a greater tendency to allow potassium to flow into the cell rather than out of it. Their voltage dependence is regulated by the concentration of extracellular potassium; as external potassium is raised, the voltage range of the channel opening shifts to more positive voltages. The inward rectification is mainly due to the blockage of outward current by internal magnesium. Can be blocked by extracellular barium and cesium. Probably participates in establishing action potential waveform and excitability of neuronal and muscle tissues. This Oryctolagus cuniculus (Rabbit) protein is Inward rectifier potassium channel 2 (KCNJ2).